A 224-amino-acid polypeptide reads, in one-letter code: UPF0758 protein Pmen_4376 (224 aa).

The 123-residue stretch at 102–224 (ALESPQAVRD…PLSMAELGWM (123 aa)) folds into the MPN domain. Zn(2+)-binding residues include H173, H175, and D186. Residues 173–186 (HNHPSGVCEPSQAD) carry the JAMM motif motif.

The protein belongs to the UPF0758 family.

The polypeptide is UPF0758 protein Pmen_4376 (Ectopseudomonas mendocina (strain ymp) (Pseudomonas mendocina)).